The sequence spans 476 residues: Surface membrane glycoprotein GP46/M-2 (476 aa).

The first 32 residues, Met1–Ala32, serve as a signal peptide directing secretion. Tandem repeats lie at residues Val107–Ser130, Ser131–Ser154, Glu155–Ser178, and Ser179–Arg202. The 4 X 24 AA tandem repeats stretch occupies residues Val107–Arg202. Disordered regions lie at residues Ala231–Gly255 and Ala348–Ala370. Residue Cys452 is the site of GPI-anchor amidated cysteine attachment. Residues Pro453–Gly476 constitute a propeptide, removed in mature form.

The protein localises to the cell membrane. This chain is Surface membrane glycoprotein GP46/M-2, found in Leishmania amazonensis.